The chain runs to 282 residues: Ribonuclease P protein subunit p38 (282 aa).

2 disordered regions span residues 1–21 and 61–103; these read MAAAPQAPGRGSVRKTRPLPV and EDRK…QASG. The residue at position 2 (alanine 2) is an N-acetylalanine. Position 12 is a phosphoserine (serine 12). A compositionally biased stretch (basic and acidic residues) spans 88–97; the sequence is EDLKKEKPKG. Phosphoserine occurs at positions 226 and 235. The interval 262-282 is disordered; the sequence is KLIPNPNKIRKPPKSKRTASK. Residues 269–282 show a composition bias toward basic residues; the sequence is KIRKPPKSKRTASK.

It belongs to the eukaryotic ribosomal protein eL8 family. Component of nuclear RNase P and RNase MRP ribonucleoproteins. RNase P consists of a catalytic RNA moiety and about 10 protein subunits; POP1, POP4, POP5, POP7, RPP14, RPP21, RPP25, RPP30, RPP38 and RPP40. Within the RNase P complex, POP1, POP7 and RPP25 form the 'finger' subcomplex, POP5, RPP14, RPP40 and homodimeric RPP30 form the 'palm' subcomplex, and RPP21, POP4 and RPP38 form the 'wrist' subcomplex. All subunits of the RNase P complex interact with the catalytic RNA. Several subunits of RNase P are also part of the RNase MRP complex. RNase MRP consists of a catalytic RNA moiety and about 8 protein subunits; POP1, POP7, RPP25, RPP30, RPP38, RPP40 and possibly also POP4 and POP5.

It localises to the nucleus. The protein resides in the nucleolus. In terms of biological role, component of ribonuclease P, a ribonucleoprotein complex that generates mature tRNA molecules by cleaving their 5'-ends. Also a component of the MRP ribonuclease complex, which cleaves pre-rRNA sequences. The polypeptide is Ribonuclease P protein subunit p38 (RPP38) (Bos taurus (Bovine)).